Consider the following 859-residue polypeptide: Outer membrane usher protein AfaC (859 aa).

The first 28 residues, Met1–Arg28, serve as a signal peptide directing secretion.

The protein belongs to the fimbrial export usher family.

Its subcellular location is the cell outer membrane. In terms of biological role, involved in the export and assembly of AFA-III afimbrial adhesin subunits across the outer membrane. This is Outer membrane usher protein AfaC (afaC) from Escherichia coli.